A 327-amino-acid polypeptide reads, in one-letter code: Endo-1,4-beta-xylanase C (327 aa).

Positions 1-15 (MKFSSLLFTASLVAA) are cleaved as a signal peptide. One can recognise a GH10 domain in the interval 43-325 (TITDPNLLQS…KPAYTAVVNA (283 aa)). Residue E154 is the Proton donor of the active site. E262 functions as the Nucleophile in the catalytic mechanism. The cysteines at positions 280 and 286 are disulfide-linked.

This sequence belongs to the glycosyl hydrolase 10 (cellulase F) family.

The protein localises to the secreted. The catalysed reaction is Endohydrolysis of (1-&gt;4)-beta-D-xylosidic linkages in xylans.. It functions in the pathway glycan degradation; xylan degradation. Its activity is regulated as follows. Weakly inhibited by the wheat xylanase inhibiting protein I (XIP-I). Endo-1,4-beta-xylanase involved in the hydrolysis of xylan, a major structural heterogeneous polysaccharide found in plant biomass representing the second most abundant polysaccharide in the biosphere, after cellulose. Plays an important role in causing fusarium head blight (FHB) on cereal crops. This is Endo-1,4-beta-xylanase C (XYLC) from Gibberella zeae (strain ATCC MYA-4620 / CBS 123657 / FGSC 9075 / NRRL 31084 / PH-1) (Wheat head blight fungus).